The sequence spans 164 residues: Small ribosomal subunit protein uS9 (164 aa).

This sequence belongs to the universal ribosomal protein uS9 family.

In Rickettsia bellii (strain OSU 85-389), this protein is Small ribosomal subunit protein uS9.